We begin with the raw amino-acid sequence, 146 residues long: Putative pre-16S rRNA nuclease (146 aa).

This sequence belongs to the YqgF nuclease family.

It is found in the cytoplasm. Functionally, could be a nuclease involved in processing of the 5'-end of pre-16S rRNA. The chain is Putative pre-16S rRNA nuclease from Dechloromonas aromatica (strain RCB).